We begin with the raw amino-acid sequence, 20 residues long: Agglutinin beta-4 chain (20 aa).

This sequence belongs to the jacalin lectin family. In terms of assembly, tetramer of four alpha chains associated with two or four beta chains.

Functionally, D-galactose-specific lectin, binds the T-antigen structure Gal-beta1,3-GalNAc (Thomsen-Friedenreich-antigen-specific lectin). Potent and selective stimulant of distinct T- and B-cell functions. Shows a unique ability to specifically recognize IgA-1 from human serum. This is Agglutinin beta-4 chain from Artocarpus integer (Jack fruit).